A 103-amino-acid chain; its full sequence is Small ribosomal subunit protein uS10 (103 aa).

Belongs to the universal ribosomal protein uS10 family. As to quaternary structure, part of the 30S ribosomal subunit.

Its function is as follows. Involved in the binding of tRNA to the ribosomes. This is Small ribosomal subunit protein uS10 from Hahella chejuensis (strain KCTC 2396).